An 81-amino-acid chain; its full sequence is Protein RADIALIS-like 3 (81 aa).

Residues serine 7–asparagine 62 form the SANT domain.

Expressed just outside the vascular bundles in the rosette stem and the leaf traces. Not detected in floral primordia.

The protein resides in the nucleus. Functionally, probable transcription factor. The sequence is that of Protein RADIALIS-like 3 (RL3) from Arabidopsis thaliana (Mouse-ear cress).